The sequence spans 206 residues: Large ribosomal subunit protein uL4 (206 aa).

The tract at residues 47–94 (NRAQKGRAEVSKSTRKPWRQKGTGRARAGMASSPLWRGGGRVFPNSPE) is disordered. Residues 59–70 (STRKPWRQKGTG) show a composition bias toward basic residues.

Belongs to the universal ribosomal protein uL4 family. In terms of assembly, part of the 50S ribosomal subunit.

Functionally, one of the primary rRNA binding proteins, this protein initially binds near the 5'-end of the 23S rRNA. It is important during the early stages of 50S assembly. It makes multiple contacts with different domains of the 23S rRNA in the assembled 50S subunit and ribosome. Its function is as follows. Forms part of the polypeptide exit tunnel. The sequence is that of Large ribosomal subunit protein uL4 from Aromatoleum aromaticum (strain DSM 19018 / LMG 30748 / EbN1) (Azoarcus sp. (strain EbN1)).